A 388-amino-acid chain; its full sequence is Angiopoietin-related protein 5 (388 aa).

The signal sequence occupies residues 1-25 (MMSPSQASLLFLNVCIFICGEAVQG). An N-linked (GlcNAc...) asparagine glycan is attached at N53. The stretch at 98 to 123 (LRNMMDEQQASLDYLSNQVNELMNRV) forms a coiled coil. One can recognise a Fibrinogen C-terminal domain in the interval 141–383 (RPVQSHGLDC…SVSMKIRRMY (243 aa)). An N-linked (GlcNAc...) asparagine glycan is attached at N238. 2 cysteine pairs are disulfide-bonded: C310/C314 and C324/C338. N329 is a glycosylation site (N-linked (GlcNAc...) asparagine).

Mainly expressed in adult heart.

It is found in the secreted. The chain is Angiopoietin-related protein 5 (ANGPTL5) from Homo sapiens (Human).